The following is a 582-amino-acid chain: 2-isopropylmalate synthase (582 aa).

Residues 40-314 enclose the Pyruvate carboxyltransferase domain; it reads PRWCAVDLRD…DPMIDFSDID (275 aa). 4 residues coordinate Mg(2+): Asp-49, His-253, His-255, and Asn-289. Residues 456–582 are regulatory domain; the sequence is SPAGHPGGQW…NRAIRDNQVD (127 aa).

It belongs to the alpha-IPM synthase/homocitrate synthase family. LeuA type 2 subfamily. As to quaternary structure, homodimer. Mg(2+) is required as a cofactor.

It localises to the cytoplasm. The catalysed reaction is 3-methyl-2-oxobutanoate + acetyl-CoA + H2O = (2S)-2-isopropylmalate + CoA + H(+). It functions in the pathway amino-acid biosynthesis; L-leucine biosynthesis; L-leucine from 3-methyl-2-oxobutanoate: step 1/4. In terms of biological role, catalyzes the condensation of the acetyl group of acetyl-CoA with 3-methyl-2-oxobutanoate (2-ketoisovalerate) to form 3-carboxy-3-hydroxy-4-methylpentanoate (2-isopropylmalate). The protein is 2-isopropylmalate synthase of Renibacterium salmoninarum (strain ATCC 33209 / DSM 20767 / JCM 11484 / NBRC 15589 / NCIMB 2235).